Reading from the N-terminus, the 456-residue chain is Methylenetetrahydrofolate--tRNA-(uracil-5-)-methyltransferase TrmFO (456 aa).

Residue 7-12 (GAGLAG) participates in FAD binding.

Belongs to the MnmG family. TrmFO subfamily. The cofactor is FAD.

The protein localises to the cytoplasm. It catalyses the reaction uridine(54) in tRNA + (6R)-5,10-methylene-5,6,7,8-tetrahydrofolate + NADH + H(+) = 5-methyluridine(54) in tRNA + (6S)-5,6,7,8-tetrahydrofolate + NAD(+). The enzyme catalyses uridine(54) in tRNA + (6R)-5,10-methylene-5,6,7,8-tetrahydrofolate + NADPH + H(+) = 5-methyluridine(54) in tRNA + (6S)-5,6,7,8-tetrahydrofolate + NADP(+). Catalyzes the folate-dependent formation of 5-methyl-uridine at position 54 (M-5-U54) in all tRNAs. This is Methylenetetrahydrofolate--tRNA-(uracil-5-)-methyltransferase TrmFO from Synechococcus sp. (strain RCC307).